Consider the following 426-residue polypeptide: Glutamate-1-semialdehyde 2,1-aminomutase (426 aa).

An N6-(pyridoxal phosphate)lysine modification is found at K265.

This sequence belongs to the class-III pyridoxal-phosphate-dependent aminotransferase family. HemL subfamily. In terms of assembly, homodimer. Requires pyridoxal 5'-phosphate as cofactor.

It localises to the cytoplasm. The catalysed reaction is (S)-4-amino-5-oxopentanoate = 5-aminolevulinate. Its pathway is porphyrin-containing compound metabolism; protoporphyrin-IX biosynthesis; 5-aminolevulinate from L-glutamyl-tRNA(Glu): step 2/2. The sequence is that of Glutamate-1-semialdehyde 2,1-aminomutase (hemL) from Salmonella typhimurium (strain SL1344).